We begin with the raw amino-acid sequence, 407 residues long: Homeobox even-skipped homolog protein 1 (407 aa).

Disordered stretches follow at residues 29–120 (EAVG…SDFY) and 137–179 (EYQH…ACSA). The segment covering 102-114 (DSLSGQGQPSSSD) has biased composition (polar residues). Positions 183-242 (MRRYRTAFTREQIARLEKEFYRENYVSRPRRCELAAALNLPETTIKVWFQNRRMKDKRQR) form a DNA-binding region, homeobox.

Belongs to the even-skipped homeobox family.

It is found in the nucleus. In terms of biological role, may play a role in the specification of neuronal cell types. The sequence is that of Homeobox even-skipped homolog protein 1 (EVX1) from Homo sapiens (Human).